A 462-amino-acid chain; its full sequence is N-myc proto-oncogene protein (462 aa).

The interval Leu19 to Glu47 is interaction with AURKA. An interaction with AURKA and FBXW7 region spans residues Leu61 to Gly90. A 9aaTAD motif is present at residues Asn76–Glu85. Disordered stretches follow at residues Glu133–Pro177, Ala232–Lys290, and Ala332–Gln390. Over residues Gly138–Ala174 the composition is skewed to low complexity. The span at Thr257–Asp276 shows a compositional bias: acidic residues. Phosphoserine; by CK2 is present on residues Ser259 and Ser261. The bHLH domain occupies Glu379 to Leu431. The tract at residues Leu431–Leu452 is leucine-zipper.

Efficient DNA binding requires dimerization with another bHLH protein. Binds DNA as a heterodimer with MAX. Interacts with KDM5A, KDM5B and HUWE1. Interacts with MYCNOS. Interacts with AURKA; interaction is phospho-independent and triggers AURKA activation; AURKA competes with FBXW7 for binding to unphosphorylated MYCN but not for binding to unphosphorylated MYCN. Interacts with FBXW7; FBXW7 competes with AURKA for binding to unphosphorylated MYCN but not for binding to phosphorylated MYCN. In terms of processing, phosphorylated by GSK3-beta which may promote its degradation. Phosphorylated by AURKA.

It is found in the nucleus. Its function is as follows. Positively regulates the transcription of MYCNOS in neuroblastoma cells. The protein is N-myc proto-oncogene protein (Mycn) of Rattus norvegicus (Rat).